The chain runs to 215 residues: L-fuculose phosphate aldolase (215 aa).

Substrate is bound by residues 28 to 29, 43 to 44, and 71 to 72; these read GN, TG, and SS. Glutamate 73 acts as the Proton donor/acceptor in catalysis. Zn(2+) contacts are provided by glutamate 73, histidine 92, histidine 94, and histidine 155.

Belongs to the aldolase class II family. AraD/FucA subfamily. In terms of assembly, homotetramer. Zn(2+) serves as cofactor.

The catalysed reaction is L-fuculose 1-phosphate = (S)-lactaldehyde + dihydroxyacetone phosphate. It functions in the pathway carbohydrate degradation; L-fucose degradation; L-lactaldehyde and glycerone phosphate from L-fucose: step 3/3. Involved in the degradation of L-fucose and D-arabinose. Catalyzes the reversible cleavage of L-fuculose 1-phosphate (Fuc1P) to yield dihydroxyacetone phosphate (DHAP) and L-lactaldehyde. In Escherichia coli O157:H7, this protein is L-fuculose phosphate aldolase.